The following is a 1770-amino-acid chain: Transposon Ty2-DR3 Gag-Pol polyprotein (1770 aa).

Polar residues-rich tracts occupy residues 1–11 (MESQQLHQNPH), 19–39 (ASVTSKEVPSNQDPLAVSASN), 49–60 (KVNSQQETTPGT), 366–390 (VSRTSPNTTNTKVTSRNYHRTNSSK), 399–408 (IATSSKFSRV), and 415–435 (ESTVSSQYLSDDNELSLGQQQ). 2 disordered regions span residues 1–89 (MESQ…QQHG) and 355–449 (SQYK…SNDE). The RNA-binding stretch occupies residues 295–397 (ENNINVSDRL…SSKPRAAKAH (103 aa)). The For protease activity; shared with dimeric partner role is filled by aspartate 457. The tract at residues 579–636 (NVNKSKSVNKYPYPLIHRMLGHANFRSIQKSLKKNAVTYLKESDIEWSNASTYQCPDC) is integrase-type zinc finger-like. Residues 656-831 (ESYEPFQYLH…AGLDITTILP (176 aa)) form the Integrase catalytic domain. Residues aspartate 667 and aspartate 732 each contribute to the Mg(2+) site. Disordered regions lie at residues 1005–1038 (GGTIESDTTSPRHSSTFTARNQKRPGSPNDMIDL) and 1057–1205 (GGTE…TEIE). 2 stretches are compositionally biased toward polar residues: residues 1009-1024 (ESDTTSPRHSSTFTAR) and 1065-1082 (QRNSDTNIKYRTTNSTPS). The short motif at 1193–1227 (KKRSLEDNETEIEVSRDTWNNKNMRSLEPPRSKKR) is the Bipartite nuclear localization signal element. One can recognise a Reverse transcriptase Ty1/copia-type domain in the interval 1353-1491 (NDYYITQLDI…DILGLEIKYQ (139 aa)). Mg(2+)-binding residues include aspartate 1361, aspartate 1442, aspartate 1443, aspartate 1625, glutamate 1667, and aspartate 1700. The region spanning 1625-1767 (DASYGNQPYY…IKTFKLLTNK (143 aa)) is the RNase H Ty1/copia-type domain.

As to quaternary structure, the capsid protein forms a homotrimer, from which the VLPs are assembled. The protease is a homodimer, whose active site consists of two apposed aspartic acid residues. Post-translationally, initially, virus-like particles (VLPs) are composed of the structural unprocessed proteins Gag and Gag-Pol, and also contain the host initiator methionine tRNA (tRNA(i)-Met) which serves as a primer for minus-strand DNA synthesis, and a dimer of genomic Ty RNA. Processing of the polyproteins occurs within the particle and proceeds by an ordered pathway, called maturation. First, the protease (PR) is released by autocatalytic cleavage of the Gag-Pol polyprotein, and this cleavage is a prerequisite for subsequent processing at the remaining sites to release the mature structural and catalytic proteins. Maturation takes place prior to the RT reaction and is required to produce transposition-competent VLPs.

Its subcellular location is the cytoplasm. It localises to the nucleus. It carries out the reaction DNA(n) + a 2'-deoxyribonucleoside 5'-triphosphate = DNA(n+1) + diphosphate. The enzyme catalyses Endonucleolytic cleavage to 5'-phosphomonoester.. Capsid protein (CA) is the structural component of the virus-like particle (VLP), forming the shell that encapsulates the retrotransposons dimeric RNA genome. The particles are assembled from trimer-clustered units and there are holes in the capsid shells that allow for the diffusion of macromolecules. CA also has nucleocapsid-like chaperone activity, promoting primer tRNA(i)-Met annealing to the multipartite primer-binding site (PBS), dimerization of Ty2 RNA and initiation of reverse transcription. Its function is as follows. The aspartyl protease (PR) mediates the proteolytic cleavages of the Gag and Gag-Pol polyproteins after assembly of the VLP. In terms of biological role, reverse transcriptase/ribonuclease H (RT) is a multifunctional enzyme that catalyzes the conversion of the retro-elements RNA genome into dsDNA within the VLP. The enzyme displays a DNA polymerase activity that can copy either DNA or RNA templates, and a ribonuclease H (RNase H) activity that cleaves the RNA strand of RNA-DNA heteroduplexes during plus-strand synthesis and hydrolyzes RNA primers. The conversion leads to a linear dsDNA copy of the retrotransposon that includes long terminal repeats (LTRs) at both ends. Functionally, integrase (IN) targets the VLP to the nucleus, where a subparticle preintegration complex (PIC) containing at least integrase and the newly synthesized dsDNA copy of the retrotransposon must transit the nuclear membrane. Once in the nucleus, integrase performs the integration of the dsDNA into the host genome. In Saccharomyces cerevisiae (strain ATCC 204508 / S288c) (Baker's yeast), this protein is Transposon Ty2-DR3 Gag-Pol polyprotein (TY2B-DR3).